We begin with the raw amino-acid sequence, 38 residues long: Large ribosomal subunit protein bL36 (38 aa).

It belongs to the bacterial ribosomal protein bL36 family.

In Alcanivorax borkumensis (strain ATCC 700651 / DSM 11573 / NCIMB 13689 / SK2), this protein is Large ribosomal subunit protein bL36.